The sequence spans 513 residues: Glycogen synthase (513 aa).

Lys47 contacts ADP-alpha-D-glucose.

This sequence belongs to the glycosyltransferase 1 family. Bacterial/plant glycogen synthase subfamily.

It catalyses the reaction [(1-&gt;4)-alpha-D-glucosyl](n) + ADP-alpha-D-glucose = [(1-&gt;4)-alpha-D-glucosyl](n+1) + ADP + H(+). Its pathway is glycan biosynthesis; glycogen biosynthesis. Synthesizes alpha-1,4-glucan chains using ADP-glucose. In Pseudomonas paraeruginosa (strain DSM 24068 / PA7) (Pseudomonas aeruginosa (strain PA7)), this protein is Glycogen synthase.